The chain runs to 153 residues: Cofilin (153 aa).

The 145-residue stretch at 4-148 (SGATVSQDCI…EYDSILKTVS (145 aa)) folds into the ADF-H domain.

It belongs to the actin-binding proteins ADF family.

It localises to the cytoplasm. The protein localises to the cytoskeleton. It is found in the nucleus matrix. Its function is as follows. Controls reversibly actin polymerization and depolymerization in a pH-sensitive manner. It has the ability to bind G- and F-actin in a 1:1 ratio of cofilin to actin. Binding to F-actin is regulated by tropomyosin. It is the major component of intranuclear and cytoplasmic actin rods. Required for accumulation of actin at the cell division site via depolymerizing actin at the cell ends. In association with myosin II has a role in the assembly of the contractile ring via severing actin filaments. Involved in the maintenance of the contractile ring once formed. In association with profilin and capping protein, has a role in the mitotic reorganization of the actin cytoskeleton. The polypeptide is Cofilin (COF1) (Gibberella zeae (strain ATCC MYA-4620 / CBS 123657 / FGSC 9075 / NRRL 31084 / PH-1) (Wheat head blight fungus)).